A 404-amino-acid chain; its full sequence is LL-diaminopimelate aminotransferase (404 aa).

Substrate is bound by residues Tyr-15 and Gly-42. Pyridoxal 5'-phosphate contacts are provided by residues Tyr-72, 108–109 (AK), Tyr-132, Asn-188, Tyr-219, and 247–249 (SFS). Residues Lys-109, Tyr-132, and Asn-188 each contribute to the substrate site. The residue at position 250 (Lys-250) is an N6-(pyridoxal phosphate)lysine. Residues Arg-258 and Asn-288 each coordinate pyridoxal 5'-phosphate. Substrate-binding residues include Asn-288 and Arg-384.

Belongs to the class-I pyridoxal-phosphate-dependent aminotransferase family. LL-diaminopimelate aminotransferase subfamily. In terms of assembly, homodimer. The cofactor is pyridoxal 5'-phosphate.

The enzyme catalyses (2S,6S)-2,6-diaminopimelate + 2-oxoglutarate = (S)-2,3,4,5-tetrahydrodipicolinate + L-glutamate + H2O + H(+). It participates in amino-acid biosynthesis; L-lysine biosynthesis via DAP pathway; LL-2,6-diaminopimelate from (S)-tetrahydrodipicolinate (aminotransferase route): step 1/1. Functionally, involved in the synthesis of meso-diaminopimelate (m-DAP or DL-DAP), required for both lysine and peptidoglycan biosynthesis. Catalyzes the direct conversion of tetrahydrodipicolinate to LL-diaminopimelate. This Lachnoclostridium phytofermentans (strain ATCC 700394 / DSM 18823 / ISDg) (Clostridium phytofermentans) protein is LL-diaminopimelate aminotransferase.